A 374-amino-acid polypeptide reads, in one-letter code: SKP1-interacting partner 15 (374 aa).

The 46-residue stretch at serine 3–isoleucine 48 folds into the F-box domain.

In terms of assembly, part of a SCF (ASK-cullin-F-box) protein ligase complex. Interacts with SKP1A/ASK1, SKP1B/ASK2, ASK11 and ASK13.

The protein resides in the nucleus. It participates in protein modification; protein ubiquitination. In terms of biological role, component of SCF(ASK-cullin-F-box) E3 ubiquitin ligase complexes, which may mediate the ubiquitination and subsequent proteasomal degradation of target proteins. This Arabidopsis thaliana (Mouse-ear cress) protein is SKP1-interacting partner 15 (SKIP15).